The sequence spans 225 residues: MPVTVRWLGETPYDACFDAMRAFTDARTPDTDDEIWVVEHPPVYTLGQAGNPAHLLVADSGVPLVKVDRGGQITYHGPGQIVAYLLVDLRRRKLMVRTLVTRIEEAVIETLAAYNLASARKAGAPGIYVESGPHRGAKIAALGLKIRNGCSYHGLSVNVKMDLRPFLAINPCGYAGLETIDMASLGATADWHEVAQTLVRRLIAHLDGATAAAALPQQALEQSND.

Positions 29–210 (PDTDDEIWVV…RLIAHLDGAT (182 aa)) constitute a BPL/LPL catalytic domain. Substrate contacts are provided by residues 69 to 76 (RGGQITYH), 141 to 143 (ALG), and 154 to 156 (GLS). Catalysis depends on Cys-172, which acts as the Acyl-thioester intermediate.

The protein belongs to the LipB family.

Its subcellular location is the cytoplasm. It catalyses the reaction octanoyl-[ACP] + L-lysyl-[protein] = N(6)-octanoyl-L-lysyl-[protein] + holo-[ACP] + H(+). It functions in the pathway protein modification; protein lipoylation via endogenous pathway; protein N(6)-(lipoyl)lysine from octanoyl-[acyl-carrier-protein]: step 1/2. Catalyzes the transfer of endogenously produced octanoic acid from octanoyl-acyl-carrier-protein onto the lipoyl domains of lipoate-dependent enzymes. Lipoyl-ACP can also act as a substrate although octanoyl-ACP is likely to be the physiological substrate. This chain is Octanoyltransferase, found in Burkholderia pseudomallei (strain K96243).